Consider the following 161-residue polypeptide: Large ribosomal subunit protein uL15 (161 aa).

The disordered stretch occupies residues 1–41 (MTKLNELAPAPGSTKGRMRVGRGPGSGKGKTAGRGVKGQKA). Residues 22–36 (RGPGSGKGKTAGRGV) are compositionally biased toward gly residues.

Belongs to the universal ribosomal protein uL15 family. In terms of assembly, part of the 50S ribosomal subunit.

Binds to the 23S rRNA. The polypeptide is Large ribosomal subunit protein uL15 (Caulobacter sp. (strain K31)).